An 886-amino-acid polypeptide reads, in one-letter code: Microsomal triacylglycerol transfer protein (886 aa).

The signal sequence occupies residues 1–27 (MENKNKKCLRTLLLLALFLGLLEDGKT). The Vitellogenin domain maps to 30 to 653 (IAPNSQQIFK…SQASSFKLGI (624 aa)). N-linked (GlcNAc...) asparagine glycans are attached at residues Asn358, Asn484, Asn502, and Asn616.

The protein localises to the endoplasmic reticulum. Its subcellular location is the golgi apparatus. It carries out the reaction a 1,2-diacyl-sn-glycero-3-phosphocholine(in) = a 1,2-diacyl-sn-glycero-3-phosphocholine(out). It catalyses the reaction a 1,2-diacyl-sn-glycero-3-phosphoethanolamine(in) = a 1,2-diacyl-sn-glycero-3-phosphoethanolamine(out). In terms of biological role, catalyzes the transport of phospholipids such as phosphatidylethanolamine (1,2-diacyl-sn-glycero-3-phosphoethanolamine) and phosphatidylcholine (1,2-diacyl-sn-glycero-3-phosphocholine) between membranes. Required for the assembly and secretion of plasma lipoproteins that contain apolipoprotein B. The polypeptide is Microsomal triacylglycerol transfer protein (Drosophila melanogaster (Fruit fly)).